We begin with the raw amino-acid sequence, 364 residues long: Chorismate synthase (364 aa).

The interval 41-60 (MQHDLDRRRPGTSRYTTARR) is disordered. The NADP(+) site is built by R48 and R54. FMN-binding positions include 125–127 (RSS), 238–239 (NA), G278, 293–297 (KPTSS), and R319.

The protein belongs to the chorismate synthase family. As to quaternary structure, homotetramer. The cofactor is FMNH2.

The catalysed reaction is 5-O-(1-carboxyvinyl)-3-phosphoshikimate = chorismate + phosphate. It participates in metabolic intermediate biosynthesis; chorismate biosynthesis; chorismate from D-erythrose 4-phosphate and phosphoenolpyruvate: step 7/7. Catalyzes the anti-1,4-elimination of the C-3 phosphate and the C-6 proR hydrogen from 5-enolpyruvylshikimate-3-phosphate (EPSP) to yield chorismate, which is the branch point compound that serves as the starting substrate for the three terminal pathways of aromatic amino acid biosynthesis. This reaction introduces a second double bond into the aromatic ring system. This is Chorismate synthase from Shewanella sp. (strain MR-4).